Here is a 393-residue protein sequence, read N- to C-terminus: Probable acetyl-CoA acetyltransferase (393 aa).

C88 acts as the Acyl-thioester intermediate in catalysis. Catalysis depends on proton acceptor residues H349 and C379.

The protein belongs to the thiolase-like superfamily. Thiolase family.

The catalysed reaction is 2 acetyl-CoA = acetoacetyl-CoA + CoA. The protein is Probable acetyl-CoA acetyltransferase (fadA4) of Mycobacterium leprae (strain TN).